The chain runs to 1935 residues: Myosin-7 (1935 aa).

The region spanning 32 to 81 is the Myosin N-terminal SH3-like domain; the sequence is DLKKDVFVPDDKEEFVKATILSREGGKVTAETEHGKTVTVKEDQVLQQNP. Residues 85–778 enclose the Myosin motor domain; sequence DKIEDMAMLT…LLGLLEEMRD (694 aa). The residue at position 129 (Lys129) is an N6,N6,N6-trimethyllysine. An ATP-binding site is contributed by 178–185; the sequence is GESGAGKT. At Thr378 the chain carries Phosphothreonine. Actin-binding regions lie at residues 655-677 and 757-771; these read LNKL…IPNE and KFGH…GLLG. Positions 781 to 810 constitute an IQ domain; that stretch reads LSRIITRIQAQSRGVLSRMEFKKLLERRDS. Residues 839 to 1935 adopt a coiled-coil conformation; sequence LLKSAETEKE…DIGTKGLNEE (1097 aa). A phosphoserine mark is found at Ser1137 and Ser1269. A Phosphothreonine modification is found at Thr1282. At Tyr1308 the chain carries Phosphotyrosine. At Thr1309 the chain carries Phosphothreonine. At Ser1510 the chain carries Phosphoserine. Thr1513 is subject to Phosphothreonine. The tract at residues 1907–1935 is disordered; that stretch reads EERADIAESQVNKLRAKSRDIGTKGLNEE. Basic and acidic residues predominate over residues 1923 to 1935; the sequence is KSRDIGTKGLNEE.

It belongs to the TRAFAC class myosin-kinesin ATPase superfamily. Myosin family. As to quaternary structure, muscle myosin is a hexameric protein that consists of 2 heavy chain subunits (MHC), 2 alkali light chain subunits (MLC) and 2 regulatory light chain subunits (MLC-2). Interacts with ECPAS. Interacts (via C-terminus) with LRRC39.

Its subcellular location is the cytoplasm. The protein localises to the myofibril. The protein resides in the sarcomere. In terms of biological role, myosins are actin-based motor molecules with ATPase activity essential for muscle contraction. Forms regular bipolar thick filaments that, together with actin thin filaments, constitute the fundamental contractile unit of skeletal and cardiac muscle. This is Myosin-7 (MYH7) from Bos taurus (Bovine).